The sequence spans 282 residues: NADPH-dependent 7-cyano-7-deazaguanine reductase (282 aa).

88–90 (IES) is a binding site for substrate. 90–91 (SK) contributes to the NADPH binding site. The active-site Thioimide intermediate is the C190. D197 (proton donor) is an active-site residue. 229-230 (HE) provides a ligand contact to substrate. 258–259 (RG) is an NADPH binding site.

Belongs to the GTP cyclohydrolase I family. QueF type 2 subfamily. As to quaternary structure, homodimer.

The protein localises to the cytoplasm. It catalyses the reaction 7-aminomethyl-7-carbaguanine + 2 NADP(+) = 7-cyano-7-deazaguanine + 2 NADPH + 3 H(+). Its pathway is tRNA modification; tRNA-queuosine biosynthesis. Functionally, catalyzes the NADPH-dependent reduction of 7-cyano-7-deazaguanine (preQ0) to 7-aminomethyl-7-deazaguanine (preQ1). In Salmonella schwarzengrund (strain CVM19633), this protein is NADPH-dependent 7-cyano-7-deazaguanine reductase.